Here is a 55-residue protein sequence, read N- to C-terminus: Large ribosomal subunit protein bL33 (55 aa).

Residues 1 to 11 (MAKSGRDKIKL) show a composition bias toward basic and acidic residues. The disordered stretch occupies residues 1 to 27 (MAKSGRDKIKLESTAGTGHFYTTTKNK). Residues 14–24 (TAGTGHFYTTT) are compositionally biased toward polar residues.

It belongs to the bacterial ribosomal protein bL33 family.

The polypeptide is Large ribosomal subunit protein bL33 (Herminiimonas arsenicoxydans).